The chain runs to 155 residues: SsrA-binding protein (155 aa).

This sequence belongs to the SmpB family.

It localises to the cytoplasm. Its function is as follows. Required for rescue of stalled ribosomes mediated by trans-translation. Binds to transfer-messenger RNA (tmRNA), required for stable association of tmRNA with ribosomes. tmRNA and SmpB together mimic tRNA shape, replacing the anticodon stem-loop with SmpB. tmRNA is encoded by the ssrA gene; the 2 termini fold to resemble tRNA(Ala) and it encodes a 'tag peptide', a short internal open reading frame. During trans-translation Ala-aminoacylated tmRNA acts like a tRNA, entering the A-site of stalled ribosomes, displacing the stalled mRNA. The ribosome then switches to translate the ORF on the tmRNA; the nascent peptide is terminated with the 'tag peptide' encoded by the tmRNA and targeted for degradation. The ribosome is freed to recommence translation, which seems to be the essential function of trans-translation. The protein is SsrA-binding protein of Streptococcus equi subsp. equi (strain 4047).